The sequence spans 481 residues: Ankyrin repeat, SAM and basic leucine zipper domain-containing protein 1 (481 aa).

The segment covering 1 to 16 (MASGGLRGLAVAGGGE) has biased composition (gly residues). A disordered region spans residues 1–23 (MASGGLRGLAVAGGGESSDSEDD). A phosphoserine mark is found at S17, S18, and S20. ANK repeat units follow at residues 45-74 (EKNETFKKALTTGDISLVQELLDSGISVDS), 78-107 (YGWTPLMYAASIANVELVRVLLDRGANASF), 110-144 (DKQTILITACSARGSEEQILKCVELLLSRNADPNV), 148-177 (RLMTPIMYAARDGHPQVVAVLVAHGAEVNT), 181-210 (NGYTALTWAARQGHKNVVLKLLELGANKML), and 214-243 (DGKIPSEIAKRNKHLEIFNFLSLTLNPLEG). Residues 272-334 (SYTAFGDLEI…KILSALKELE (63 aa)) enclose the SAM domain.

In terms of assembly, interacts with DDX4, PIWIL1, RANBP9 and TDRD1.

The protein localises to the cytoplasm. Plays a central role during spermatogenesis by repressing transposable elements and preventing their mobilization, which is essential for the germline integrity. Acts via the piRNA metabolic process, which mediates the repression of transposable elements during meiosis by forming complexes composed of piRNAs and Piwi proteins and governs the methylation and subsequent repression of transposons. Its association with pi-bodies suggests a participation in the primary piRNAs metabolic process. Required prior to the pachytene stage to facilitate the production of multiple types of piRNAs, including those associated with repeats involved in the regulation of retrotransposons. May act by mediating protein-protein interactions during germ cell maturation. The sequence is that of Ankyrin repeat, SAM and basic leucine zipper domain-containing protein 1 (ASZ1) from Microcebus murinus (Gray mouse lemur).